A 334-amino-acid polypeptide reads, in one-letter code: Spermidine synthase 1 (334 aa).

Positions 1–37 (MAAPENTLHSTDSPLKRQREDEVNGVSDTLSKEPQPN) are disordered. The span at 26-37 (VSDTLSKEPQPN) shows a compositional bias: polar residues. In terms of domain architecture, PABS spans 44–281 (PGWFSEISPM…GMIGFMLCST (238 aa)). S-adenosyl 3-(methylsulfanyl)propylamine is bound at residue Q75. Position 105 (Y105) interacts with putrescine. Residues Q106, D130, E150, 181–182 (DG), and D200 contribute to the S-adenosyl 3-(methylsulfanyl)propylamine site. Catalysis depends on D200, which acts as the Proton acceptor. Putrescine contacts are provided by residues 200-203 (DSSD) and Y269.

It belongs to the spermidine/spermine synthase family.

The catalysed reaction is S-adenosyl 3-(methylsulfanyl)propylamine + putrescine = S-methyl-5'-thioadenosine + spermidine + H(+). Its pathway is amine and polyamine biosynthesis; spermidine biosynthesis; spermidine from putrescine: step 1/1. This is Spermidine synthase 1 (SPDSYN1) from Pisum sativum (Garden pea).